A 124-amino-acid chain; its full sequence is Small ribosomal subunit protein uS12 (124 aa).

Asp-89 carries the 3-methylthioaspartic acid modification.

The protein belongs to the universal ribosomal protein uS12 family. In terms of assembly, part of the 30S ribosomal subunit. Contacts proteins S8 and S17. May interact with IF1 in the 30S initiation complex.

In terms of biological role, with S4 and S5 plays an important role in translational accuracy. Its function is as follows. Interacts with and stabilizes bases of the 16S rRNA that are involved in tRNA selection in the A site and with the mRNA backbone. Located at the interface of the 30S and 50S subunits, it traverses the body of the 30S subunit contacting proteins on the other side and probably holding the rRNA structure together. The combined cluster of proteins S8, S12 and S17 appears to hold together the shoulder and platform of the 30S subunit. In Shewanella sp. (strain ANA-3), this protein is Small ribosomal subunit protein uS12.